The chain runs to 1469 residues: ABC transporter G family member 36 (1469 aa).

Met-1 bears the N-acetylmethionine mark. Phosphoserine occurs at positions 37, 38, and 40. The residue at position 43 (Thr-43) is a Phosphothreonine. A Phosphoserine modification is found at Ser-45. Residues 171–444 enclose the ABC transporter 1 domain; sequence LGMIGIQFAK…FESFGFKCPE (274 aa). 204-211 provides a ligand contact to ATP; that stretch reads GPPSSGKT. The ABC transmembrane type-2 1 domain maps to 522 to 735; sequence ELLKSCWDKE…AFNGLVVNEM (214 aa). The next 7 helical transmembrane spans lie at 540–560, 575–595, 621–641, 659–679, 685–705, 713–733, and 772–792; these read FFYV…STLF, LYIG…FAEM, LPTF…WMVV, FLLV…IASV, IANT…GFLL, WWGW…LVVN, and ISVG…TLAL. The tract at residues 806 to 852 is disordered; it reads PEEENEDADQGKDPMRRSLSTADGNRRGEVAMGRMSRDSAAEASGGA. Phosphoserine is present on residues Ser-825, Ser-841, and Ser-844. Residues 829–845 are compositionally biased toward basic and acidic residues; the sequence is GNRRGEVAMGRMSRDSA. The ABC transporter 2 domain maps to 867–1119; that stretch reads MSFDDVKYFV…KVVEYFESFP (253 aa). 912 to 919 lines the ATP pocket; it reads GVSGAGKT. Residues 1192 to 1406 enclose the ABC transmembrane type-2 2 domain; it reads GQFKSCLWKQ…TVYGLIVSQY (215 aa). A run of 7 helical transmembrane segments spans residues 1216-1236, 1239-1259, 1299-1319, 1326-1346, 1356-1376, 1384-1404, and 1441-1461; these read FIFT…IGGN, NAGD…FVGI, LPYV…MVGF, FFWF…YGMM, VASI…GFFI, WWIW…LIVS, and PVAA…AFCI.

It belongs to the ABC transporter superfamily. ABCG family. PDR (TC 3.A.1.205) subfamily. Interacts, in a Ca(2+)-dependent manner, with calmodulins CaM3, CaM7 and several CaM-like proteins (CML8, CML9, CML12/CAL4, CML37 and CML38), as well as with calcium regulated proteins CBL4/SOS3 and KIC. In terms of processing, phosphorylated upon perception of pathogen-associated molecular patterns (PAMPs); phosphorylations at Ser-40 and Ser-45, which likely regulate transport activity, are required for plant defense against pathogens (e.g. Blumeria graminis), but dispensable for recruitment to the host-pathogen interface and penetration sites. Phosphorylation at Ser-841 seems to be required for protein stability. Ubiquitous (at protein level). Higher levels in root hairs, stomata, epidermal cells, and hydathodes. Concentrated at the infection site of infected plants, including papillae and haustoria. Accumulates at the periphery of lateral root cap and root epidermal cells, especially in the outer lateral membrane domain facing the environment.

It is found in the cell membrane. Its subcellular location is the golgi apparatus. The protein localises to the trans-Golgi network membrane. It localises to the endoplasmic reticulum membrane. In terms of biological role, together with ABCG37, regulates auxin homeostasis and responses by playing a dual role in coumarin (e.g. esculin) and in the auxin precursor indole 3-butyric acid (IBA) efflux transport, thus influencing cotyledons, roots and root hairs development. Mediates the transport (export into the apoplast) of distinct indole-type metabolites in distinct biological processes; a precursor of 4-O-beta-D-glucosyl-indol-3-yl formamide (4OGlcI3F), a pathogen-inducible tryptophan-derived compound (e.g. upon Blumeria graminis conidiospore inoculation), being a probable substrate in extracellular pathogen defense. Involved in the cellular detoxification of xenobiotics by promoting the excretion of some auxinic herbicides including 4-(2,4-dichlorophenoxy)butyric acid (2,4-DB) and other members of the phenoxyalkanoic acid family but not 2,4-dichlorophenoxyacetic acid (2,4-D). Mediates thymidine exudation in the rhizosphere. May be a transporter of lignin precursors during tracheary element differentiation. Key factor that controls the extent of cell death in the defense response. Necessary for both callose deposition and glucosinolate activation in response to pathogens. As a central component of nonhost resistance (NHR), required for limiting invasion by nonadapted pathogens including powdery mildews (e.g. Blumeria graminis and Erysiphe pisi), root-penetrating pathogenic fungi (e.g. Fusarium oxysporum), Phakopsora pachyrhizi and Colletotrichum gloeosporioides (anthracnose fungi), probably by sensing Ca(2+) via interactions with calmodulins (e.g. CaM7). Confers resistance to cadmium (Cd) and lead (Pb), probably as an efflux pump of Cd2+ or Cd conjugates, and possibly, of chemicals that mediate pathogen resistance. Promotes resistance to abiotic stresses (e.g. drought and salt stress) and favors general growth by preventing sodium accumulation in plants. Required for microbe-associated molecular patterns (MAMPs)- and salicylic acid (SA)-dependent hypersensitive cell death (HR), involving indole glucosinolate breakdown products (e.g. indole-3-acetonitrile), probably in a PEN2 myrosinase-dependent metabolic pathway, triggered by the recognition of effectors from incompatible pathogens including oomycetes and bacteria (e.g. AvrRpm1 and AvrRps4) and benzothiadiazole- (BTH), and leading to an induced protection against pathogens (e.g. Pseudomonas syringae pv. tomato DC3000, Golovinomyces orontii and Hyaloperonospora arabidopsidis). This is ABC transporter G family member 36 from Arabidopsis thaliana (Mouse-ear cress).